We begin with the raw amino-acid sequence, 515 residues long: MIILKKQHDTIIVLDFGSQYNQLIARRIREFGVYSELHPHTITAEEIKAMNPKGIIFSGGPNSVYGEGALHCDEKIFDLGLPIFGICYGMQLMTQQFGGTVERANHREYGKAVLKVENESKLYANLPEEQVVWMSHGDLVTGLPEGFVVDATSESCPIAGMSNEAKNLYGVQFHPEVRHSEHGNDLIKNFVFGVCGCSEGWNMENFIEVELEKIRETVGDKKVLCALSGGVDSSVVAVLIHKAIGDQLTCIFVDHGLLRKGEAEGVMKTFSEGFHMNVIKVDAKERFMNKLKGVEDPEQKRKIIGNEFIYVFDDEASKLEGMDFLAQGTLYTDIVESGTATAQTIKSHHNVGGLPEDMQFKLIEPLNTLFKDEVRVLGSELGIPDEIVWRQPFPGPGLGIRVLGEITEEKLEIVRESDAILREEITKAGLDREIWQYFTALPGMRSVGVMGDERTYDYTVGIRAVTSIDGMTADWARIPWDVLEKISVRIVNEVKHVNRIVYDVTSKPPATIEWE.

A Glutamine amidotransferase type-1 domain is found at 10–200 (TIIVLDFGSQ…VFGVCGCSEG (191 aa)). The Nucleophile role is filled by Cys-87. Catalysis depends on residues His-174 and Glu-176. A GMPS ATP-PPase domain is found at 201-390 (WNMENFIEVE…LGIPDEIVWR (190 aa)). 228–234 (SGGVDSS) contributes to the ATP binding site.

In terms of assembly, homodimer.

The enzyme catalyses XMP + L-glutamine + ATP + H2O = GMP + L-glutamate + AMP + diphosphate + 2 H(+). Its pathway is purine metabolism; GMP biosynthesis; GMP from XMP (L-Gln route): step 1/1. Its function is as follows. Catalyzes the synthesis of GMP from XMP. The polypeptide is GMP synthase [glutamine-hydrolyzing] (Bacillus thuringiensis subsp. konkukian (strain 97-27)).